Reading from the N-terminus, the 237-residue chain is Proteasome subunit beta type-1-B (237 aa).

Belongs to the peptidase T1B family. As to quaternary structure, the 26S proteasome consists of a 20S proteasome core and two 19S regulatory subunits. The 20S proteasome core is composed of 28 subunits that are arranged in four stacked rings, resulting in a barrel-shaped structure. The two end rings are each formed by seven alpha subunits, and the two central rings are each formed by seven beta subunits. The catalytic chamber with the active sites is on the inside of the barrel.

Its subcellular location is the cytoplasm. It is found in the nucleus. Functionally, non-catalytic component of the proteasome, a multicatalytic proteinase complex which is characterized by its ability to cleave peptides with Arg, Phe, Tyr, Leu, and Glu adjacent to the leaving group at neutral or slightly basic pH. The proteasome has an ATP-dependent proteolytic activity. In Carassius auratus (Goldfish), this protein is Proteasome subunit beta type-1-B (psmb1-B).